A 979-amino-acid chain; its full sequence is Glycine dehydrogenase (decarboxylating) (979 aa).

The residue at position 726 (Lys726) is an N6-(pyridoxal phosphate)lysine.

It belongs to the GcvP family. In terms of assembly, the glycine cleavage system is composed of four proteins: P, T, L and H. It depends on pyridoxal 5'-phosphate as a cofactor.

It catalyses the reaction N(6)-[(R)-lipoyl]-L-lysyl-[glycine-cleavage complex H protein] + glycine + H(+) = N(6)-[(R)-S(8)-aminomethyldihydrolipoyl]-L-lysyl-[glycine-cleavage complex H protein] + CO2. The glycine cleavage system catalyzes the degradation of glycine. The P protein binds the alpha-amino group of glycine through its pyridoxal phosphate cofactor; CO(2) is released and the remaining methylamine moiety is then transferred to the lipoamide cofactor of the H protein. This chain is Glycine dehydrogenase (decarboxylating), found in Ralstonia pickettii (strain 12J).